The following is a 160-amino-acid chain: Cytochrome b6-f complex subunit 4 (160 aa).

The next 3 membrane-spanning stretches (helical) occupy residues 36–56 (ILYM…GLSI), 95–115 (LVGV…PFIE), and 127–147 (PIAT…GIGA).

Belongs to the cytochrome b family. PetD subfamily. The 4 large subunits of the cytochrome b6-f complex are cytochrome b6, subunit IV (17 kDa polypeptide, petD), cytochrome f and the Rieske protein, while the 4 small subunits are petG, petL, petM and petN. The complex functions as a dimer.

The protein resides in the plastid. The protein localises to the chloroplast thylakoid membrane. Its function is as follows. Component of the cytochrome b6-f complex, which mediates electron transfer between photosystem II (PSII) and photosystem I (PSI), cyclic electron flow around PSI, and state transitions. The chain is Cytochrome b6-f complex subunit 4 from Gracilaria tenuistipitata var. liui (Red alga).